The sequence spans 426 residues: MELMMAIGYLGLALVLGSLVAKIAEKLKIPDIPLLLLLGLIIGPFLQIIPSDSAMEIFEYAGPIGLIFILLGGAFTMRISLLKRVIKTVVRLDTITFLITLLISGFIFNMVLNLPYTSPVGYLFGAITAATDPATLIPVFSRVRTNPEVAITLEAESIFNDPLGIVSTSVILGLFGLFSSSNPLIDLITLAGGAIVVGLLLAKIYEKIIIHCDFHEYVAPLVLGGAMLLLYVGDDLLPSICGYGFSGYMAVAIMGLYLGDALFRADDIDYKYIVSFCDDLSLLARVFIFVFLGACIKLSMLENYFIPGLLVALGSIFLARPLGVFLGLIGSKHSFKEKLYFALEGPRGVVPAALAVTVGIEILKNADKIPASITKYITPTDIAGTIIIGTFMTILLSVILEASWAGMLALKLLGEYKPKYKEESHH.

Transmembrane regions (helical) follow at residues 1 to 21 (MELM…SLVA), 29 to 49 (IPDI…LQII), 57 to 77 (IFEY…AFTM), 95 to 115 (ITFL…LNLP), 120 to 140 (VGYL…IPVF), 158 to 178 (IFND…FGLF), 184 to 204 (LIDL…LAKI), 208 to 228 (IIIH…GAML), 236 to 256 (LLPS…IMGL), 286 to 306 (VFIF…NYFI), 309 to 329 (LLVA…LGLI), and 382 to 402 (IAGT…ILEA).

It belongs to the monovalent cation:proton antiporter 1 (CPA1) transporter (TC 2.A.36) family.

Its subcellular location is the cell membrane. In terms of biological role, this is a Na(+)/H(+) antiporter. Can also transport lithium. The polypeptide is Na(+)/H(+) antiporter 1 (Methanocaldococcus jannaschii (strain ATCC 43067 / DSM 2661 / JAL-1 / JCM 10045 / NBRC 100440) (Methanococcus jannaschii)).